Here is a 105-residue protein sequence, read N- to C-terminus: N(4)-acetylcytidine amidohydrolase (105 aa).

Residues 7-93 enclose the ASCH domain; sequence TFFERFEHDI…VIAEIYPGLE (87 aa). Lys21 acts as the Proton acceptor in catalysis. Catalysis depends on Thr24, which acts as the Nucleophile. The active-site Proton donor is the Glu74.

Belongs to the N(4)-acetylcytidine amidohydrolase family.

It catalyses the reaction N(4)-acetylcytidine + H2O = cytidine + acetate + H(+). The catalysed reaction is N(4)-acetyl-2'-deoxycytidine + H2O = 2'-deoxycytidine + acetate + H(+). The enzyme catalyses N(4)-acetylcytosine + H2O = cytosine + acetate + H(+). Its function is as follows. Catalyzes the hydrolysis of N(4)-acetylcytidine (ac4C). The chain is N(4)-acetylcytidine amidohydrolase from Shewanella baltica (strain OS223).